The following is a 145-amino-acid chain: Sperm mitochondrial-associated cysteine-rich protein (145 aa).

4 positions are modified to phosphoserine: Ser-38, Ser-45, Ser-113, and Ser-131. Positions 105 to 145 (CSSENKTESDSDGSGQTQDRGAQTQQSPQGGQGNWNQKKTK) are disordered. Over residues 116–145 (DGSGQTQDRGAQTQQSPQGGQGNWNQKKTK) the composition is skewed to polar residues.

In terms of tissue distribution, testis. Selectively expressed in the spermatids of seminiferous tubules and in flagella of epididymal sperm.

It localises to the cytoplasm. It is found in the mitochondrion membrane. Functionally, involved in sperm motility. Its absence is associated with genetic background dependent male infertility. Infertility may be due to reduced sperm motility in the female reproductive tract and inability to penetrate the oocyte zona pellucida. The chain is Sperm mitochondrial-associated cysteine-rich protein (Smcp) from Rattus norvegicus (Rat).